The following is a 322-amino-acid chain: MFSKSIIAASLLTAVTAHQNFHQFWVNGVSPGYQVSIRMPPSNSPVLDVASDNITCNVNGNVVPSGVNTTAANEGDAITVQWDSSTHPGPIQHYLFGPVDDASMATGIGSWFKIDEYIEVNGTWASNLMDAGNMSYTFNLPTGMASGEYLLRSEMLALHSAQTVGGAQWYIGCAQLSITGTSGDSCGPSIELPGDYNATDPSIYIPDIYYGFDISTYTPPGGAVATCGASGSGATGAASATAVATSAVSSAVASSSAAGVSSSAVVASSSVASSVLASSSAVLPSSSVAAIVTSAPSTLITATSAPAATSSAVEVGDDECEA.

Positions 1–17 are cleaved as a signal peptide; the sequence is MFSKSIIAASLLTAVTA. H18 contributes to the Cu(2+) binding site. 2 N-linked (GlcNAc...) asparagine glycosylation sites follow: N53 and N68. A disulfide bridge connects residues C56 and C173. H87 contributes to the Cu(2+) binding site. Residues N121 and N133 are each glycosylated (N-linked (GlcNAc...) asparagine). Positions 159 and 168 each coordinate O2. Residue Y170 participates in Cu(2+) binding. N197 carries an N-linked (GlcNAc...) asparagine glycan.

It belongs to the polysaccharide monooxygenase AA9 family. It depends on Cu(2+) as a cofactor.

It is found in the secreted. It catalyses the reaction [(1-&gt;4)-beta-D-glucosyl]n+m + reduced acceptor + O2 = 4-dehydro-beta-D-glucosyl-[(1-&gt;4)-beta-D-glucosyl]n-1 + [(1-&gt;4)-beta-D-glucosyl]m + acceptor + H2O.. Functionally, lytic polysaccharide monooxygenase (LPMO) that depolymerizes crystalline and amorphous polysaccharides via the oxidation of scissile alpha- or beta-(1-4)-glycosidic bonds, yielding C1 and C4 oxidation products. Catalysis by LPMOs requires the reduction of the active-site copper from Cu(II) to Cu(I) by a reducing agent and H(2)O(2) or O(2) as a cosubstrate. This is AA9 family lytic polysaccharide monooxygenase B from Botryotinia fuckeliana (strain B05.10) (Noble rot fungus).